We begin with the raw amino-acid sequence, 451 residues long: UDP-N-acetyl-alpha-D-muramoyl-L-alanyl-L-glutamate epimerase (451 aa).

The protein belongs to the MurL family.

The enzyme catalyses UDP-N-acetyl-alpha-D-muramoyl-L-alanyl-L-glutamate + ATP + H2O = UDP-N-acetyl-alpha-D-muramoyl-L-alanyl-D-glutamate + AMP + diphosphate + H(+). It participates in cell wall biogenesis; peptidoglycan biosynthesis. Cell wall formation. Catalyzes epimerization of the terminal L-glutamate in UDP-N-acetyl-alpha-D-muramoyl-L-alanyl-L-glutamate. This Xanthomonas oryzae pv. oryzae (strain MAFF 311018) protein is UDP-N-acetyl-alpha-D-muramoyl-L-alanyl-L-glutamate epimerase.